A 58-amino-acid polypeptide reads, in one-letter code: Small ribosomal subunit protein bS21 (58 aa).

The protein belongs to the bacterial ribosomal protein bS21 family.

In Synechococcus sp. (strain CC9605), this protein is Small ribosomal subunit protein bS21.